The chain runs to 369 residues: Flagellar P-ring protein (369 aa).

A signal peptide spans 1-22 (MTKFKHLLALAALLLAAGAAQA).

It belongs to the FlgI family. In terms of assembly, the basal body constitutes a major portion of the flagellar organelle and consists of four rings (L,P,S, and M) mounted on a central rod.

It localises to the periplasm. The protein resides in the bacterial flagellum basal body. Assembles around the rod to form the L-ring and probably protects the motor/basal body from shearing forces during rotation. The protein is Flagellar P-ring protein of Pseudomonas aeruginosa (strain LESB58).